The following is a 523-amino-acid chain: 2-isopropylmalate synthase (523 aa).

The 263-residue stretch at 5-267 (VIIFDTTLRD…HTNINHHEIW (263 aa)) folds into the Pyruvate carboxyltransferase domain. Residues Asp14, His202, His204, and Asn238 each coordinate Mn(2+). Positions 392–523 (RLDYFSVQSG…QNKENNKETV (132 aa)) are regulatory domain.

It belongs to the alpha-IPM synthase/homocitrate synthase family. LeuA type 1 subfamily. In terms of assembly, homodimer. Requires Mn(2+) as cofactor.

It localises to the cytoplasm. It catalyses the reaction 3-methyl-2-oxobutanoate + acetyl-CoA + H2O = (2S)-2-isopropylmalate + CoA + H(+). It participates in amino-acid biosynthesis; L-leucine biosynthesis; L-leucine from 3-methyl-2-oxobutanoate: step 1/4. Its function is as follows. Catalyzes the condensation of the acetyl group of acetyl-CoA with 3-methyl-2-oxobutanoate (2-ketoisovalerate) to form 3-carboxy-3-hydroxy-4-methylpentanoate (2-isopropylmalate). This Salmonella paratyphi A (strain ATCC 9150 / SARB42) protein is 2-isopropylmalate synthase.